Consider the following 410-residue polypeptide: Enterobactin exporter EntS (410 aa).

Over 1-21 (MNKQSWLLNLSLLKTHPAFRA) the chain is Cytoplasmic. A helical membrane pass occupies residues 22-42 (VFLARFISIVSLGLLGVAVPV). Residues 43–55 (QIQMMTHSTWQVG) lie on the Periplasmic side of the membrane. Residues 56–76 (LSVTLTGGAMFVGLMVGGVLA) form a helical membrane-spanning segment. Topologically, residues 77 to 83 (DRYERKK) are cytoplasmic. Residues 84–104 (VILLARGTCGIGFIGLCLNAL) form a helical membrane-spanning segment. At 105–109 (LPEPS) the chain is on the periplasmic side. The chain crosses the membrane as a helical span at residues 110 to 130 (LLAIYLLGLWDGFFASLGVTA). Topologically, residues 131 to 156 (LLAATSALVGRENLMQAGAITMLTVR) are cytoplasmic. The chain crosses the membrane as a helical span at residues 157–177 (LGSVISPMIGGLLLATGGVAW). N178 is a topological domain (periplasmic). A helical membrane pass occupies residues 179-199 (YGLAAAGTFITLLPLLSLPEL). The Cytoplasmic portion of the chain corresponds to 200–218 (PPPPQPLEHPLKSLLAGFR). A helical transmembrane segment spans residues 219–233 (FLLASPLLGGLLTMA). Residues 234-250 (SAVLVLYPALADNWQMS) are Periplasmic-facing. Residues 251–271 (AAQIGFLYAAIPLGAAIGALT) traverse the membrane as a helical segment. At 272 to 281 (SGKLAHSARP) the chain is on the cytoplasmic side. A helical membrane pass occupies residues 282–301 (GLLMLLSTLGSFLAIGLFGL). Residues 302–307 (MPMWIL) are Periplasmic-facing. The chain crosses the membrane as a helical span at residues 308–330 (GVVCLALFGWLSAVSSLLQYTML). Over 331 to 350 (QTQTPEAMLGRINGLWTAQN) the chain is Cytoplasmic. A helical membrane pass occupies residues 351–371 (VTGDAIGAALLGGLGAMMTPV). Position 372 (A372) is a topological domain, periplasmic. Residues 373 to 393 (SASASGFGLLIIGVLLLLVLV) traverse the membrane as a helical segment. Topologically, residues 394-410 (ELRRFRQTPPQVTASDS) are cytoplasmic.

It belongs to the major facilitator superfamily. EntS (TC 2.A.1.38) family.

It localises to the cell inner membrane. Its function is as follows. Component of an export pathway for enterobactin. In Shigella flexneri, this protein is Enterobactin exporter EntS.